A 278-amino-acid polypeptide reads, in one-letter code: HTH-type transcriptional activator RhaS (278 aa).

An HTH araC/xylS-type domain is found at 174-272; that stretch reads NQLMAWLEEH…NWSPRDIRQG (99 aa). DNA-binding regions (H-T-H motif) lie at residues 191–212 and 239–262; these read EAVAEQFSLSLRTLHRQLKQHT and VTEIAYRCGFGDSNHFSTLFRREF.

In terms of assembly, binds DNA as a dimer.

The protein localises to the cytoplasm. In terms of biological role, activates expression of the rhaBAD and rhaT operons. The protein is HTH-type transcriptional activator RhaS of Salmonella schwarzengrund (strain CVM19633).